Here is a 169-residue protein sequence, read N- to C-terminus: uncharacterized protein (169 aa).

A helical transmembrane segment spans residues 10–30 (YFVTILIIIIIILIVLLIVFL). The segment at 98 to 123 (QSKPINKNNQQTKNTPTPLDDRPDLS) is disordered. Over residues 100–115 (KPINKNNQQTKNTPTP) the composition is skewed to low complexity.

The protein localises to the membrane. This is an uncharacterized protein from Acanthamoeba polyphaga (Amoeba).